Here is a 506-residue protein sequence, read N- to C-terminus: Ribose import ATP-binding protein RbsA 2 (506 aa).

2 consecutive ABC transporter domains span residues 5-241 (LRLS…VGRR) and 254-498 (ADAP…TAGT). 37-44 (GENGAGKS) is a binding site for ATP.

Belongs to the ABC transporter superfamily. Ribose importer (TC 3.A.1.2.1) family. As to quaternary structure, the complex is composed of an ATP-binding protein (RbsA), two transmembrane proteins (RbsC) and a solute-binding protein (RbsB).

It is found in the cell inner membrane. The enzyme catalyses D-ribose(out) + ATP + H2O = D-ribose(in) + ADP + phosphate + H(+). Its function is as follows. Part of the ABC transporter complex RbsABC involved in ribose import. Responsible for energy coupling to the transport system. This Burkholderia cenocepacia (strain HI2424) protein is Ribose import ATP-binding protein RbsA 2.